A 128-amino-acid polypeptide reads, in one-letter code: Flagellar hook-basal body complex protein FliE (128 aa).

The tract at residues 1-60 (MRPVASFRPPPTFSALQGGASSQATKTAGIDQRGTNQAFSLLDPQSTQSNSTDSSFGEMG) is disordered. Residues 33 to 55 (RGTNQAFSLLDPQSTQSNSTDSS) show a composition bias toward polar residues.

The protein belongs to the FliE family.

It localises to the bacterial flagellum basal body. This is Flagellar hook-basal body complex protein FliE from Rhodopirellula baltica (strain DSM 10527 / NCIMB 13988 / SH1).